The chain runs to 318 residues: Pheromone-regulated membrane protein 5 (318 aa).

A helical membrane pass occupies residues 78 to 98; sequence FIVVGGIAGVIFLAILLWWVI. S129 is modified (phosphoserine). Residues 238–247 are compositionally biased toward low complexity; it reads TISSSSASSL. Residues 238–318 are disordered; it reads TISSSSASSL…HMLEGKEQDE (81 aa). The segment covering 250–261 has biased composition (basic and acidic residues); sequence GNEKEVGEDIRK. A compositionally biased stretch (polar residues) spans 276-285; the sequence is SPESDGSVNR. 3 positions are modified to phosphoserine: S279, S282, and S288. Basic and acidic residues predominate over residues 309 to 318; the sequence is HMLEGKEQDE. K314 participates in a covalent cross-link: Glycyl lysine isopeptide (Lys-Gly) (interchain with G-Cter in ubiquitin).

Belongs to the PRM5 family.

Its subcellular location is the membrane. The polypeptide is Pheromone-regulated membrane protein 5 (PRM5) (Saccharomyces cerevisiae (strain Lalvin EC1118 / Prise de mousse) (Baker's yeast)).